We begin with the raw amino-acid sequence, 284 residues long: Bifunctional protein FolD (284 aa).

NADP(+) contacts are provided by residues 166-168 (GAS) and Ile-232.

The protein belongs to the tetrahydrofolate dehydrogenase/cyclohydrolase family. Homodimer.

It carries out the reaction (6R)-5,10-methylene-5,6,7,8-tetrahydrofolate + NADP(+) = (6R)-5,10-methenyltetrahydrofolate + NADPH. It catalyses the reaction (6R)-5,10-methenyltetrahydrofolate + H2O = (6R)-10-formyltetrahydrofolate + H(+). It functions in the pathway one-carbon metabolism; tetrahydrofolate interconversion. Catalyzes the oxidation of 5,10-methylenetetrahydrofolate to 5,10-methenyltetrahydrofolate and then the hydrolysis of 5,10-methenyltetrahydrofolate to 10-formyltetrahydrofolate. The sequence is that of Bifunctional protein FolD from Shewanella oneidensis (strain ATCC 700550 / JCM 31522 / CIP 106686 / LMG 19005 / NCIMB 14063 / MR-1).